A 354-amino-acid polypeptide reads, in one-letter code: Uroporphyrinogen decarboxylase (354 aa).

Residues 27–31 (RQAGR), Asp77, Tyr154, Ser209, and His327 each bind substrate.

The protein belongs to the uroporphyrinogen decarboxylase family. In terms of assembly, homodimer.

The protein localises to the cytoplasm. The enzyme catalyses uroporphyrinogen III + 4 H(+) = coproporphyrinogen III + 4 CO2. Its pathway is porphyrin-containing compound metabolism; protoporphyrin-IX biosynthesis; coproporphyrinogen-III from 5-aminolevulinate: step 4/4. In terms of biological role, catalyzes the decarboxylation of four acetate groups of uroporphyrinogen-III to yield coproporphyrinogen-III. This Shewanella putrefaciens (strain CN-32 / ATCC BAA-453) protein is Uroporphyrinogen decarboxylase.